We begin with the raw amino-acid sequence, 431 residues long: tRNA(Ile)-lysidine synthase (431 aa).

25 to 30 (SGGPDS) contributes to the ATP binding site.

It belongs to the tRNA(Ile)-lysidine synthase family.

Its subcellular location is the cytoplasm. It carries out the reaction cytidine(34) in tRNA(Ile2) + L-lysine + ATP = lysidine(34) in tRNA(Ile2) + AMP + diphosphate + H(+). Functionally, ligates lysine onto the cytidine present at position 34 of the AUA codon-specific tRNA(Ile) that contains the anticodon CAU, in an ATP-dependent manner. Cytidine is converted to lysidine, thus changing the amino acid specificity of the tRNA from methionine to isoleucine. The sequence is that of tRNA(Ile)-lysidine synthase from Lactobacillus gasseri (strain ATCC 33323 / DSM 20243 / BCRC 14619 / CIP 102991 / JCM 1131 / KCTC 3163 / NCIMB 11718 / NCTC 13722 / AM63).